Consider the following 102-residue polypeptide: Heat shock protein HspQ (102 aa).

It belongs to the HspQ family.

It localises to the cytoplasm. In terms of biological role, involved in the degradation of certain denaturated proteins, including DnaA, during heat shock stress. The sequence is that of Heat shock protein HspQ from Pectobacterium atrosepticum (strain SCRI 1043 / ATCC BAA-672) (Erwinia carotovora subsp. atroseptica).